The primary structure comprises 308 residues: Serine/threonine-protein phosphatase PP1 (308 aa).

Mn(2+) is bound by residues Asp-64, His-66, Asp-92, and Asn-124. His-125 acts as the Proton donor in catalysis. Mn(2+) is bound by residues His-173 and His-248.

Belongs to the PPP phosphatase family. PP-1 subfamily. Mn(2+) serves as cofactor.

It is found in the cytoplasm. It catalyses the reaction O-phospho-L-seryl-[protein] + H2O = L-seryl-[protein] + phosphate. The enzyme catalyses O-phospho-L-threonyl-[protein] + H2O = L-threonyl-[protein] + phosphate. In Neurospora crassa (strain ATCC 24698 / 74-OR23-1A / CBS 708.71 / DSM 1257 / FGSC 987), this protein is Serine/threonine-protein phosphatase PP1 (pph-3).